The chain runs to 509 residues: Ribonuclease Y (509 aa).

The chain crosses the membrane as a helical span at residues 5–25; the sequence is IIILLSVFCGIFFICFIICSS. The region spanning 199 to 259 is the KH domain; it reads TTNIVKLPSD…IRREIATRTL (61 aa). The HD domain occupies 325–418; it reads VLAHSIEVAK…VAIADSISAS (94 aa).

This sequence belongs to the RNase Y family.

Its subcellular location is the cell membrane. Functionally, endoribonuclease that initiates mRNA decay. The sequence is that of Ribonuclease Y from Mycoplasma capricolum subsp. capricolum (strain California kid / ATCC 27343 / NCTC 10154).